The primary structure comprises 438 residues: Glycogen synthase (438 aa).

Lysine 16 is a binding site for ADP-alpha-D-glucose.

The protein belongs to the glycosyltransferase 1 family. Bacterial/plant glycogen synthase subfamily.

It catalyses the reaction [(1-&gt;4)-alpha-D-glucosyl](n) + ADP-alpha-D-glucose = [(1-&gt;4)-alpha-D-glucosyl](n+1) + ADP + H(+). Its pathway is glycan biosynthesis; glycogen biosynthesis. Its function is as follows. Synthesizes alpha-1,4-glucan chains using ADP-glucose. The polypeptide is Glycogen synthase (Thermus caldophilus).